The sequence spans 300 residues: MSQVTENKVISAPVPMTPLQEFWHYFKRNKGAVVGLVYVVIVLFIAIFANWIAPYNPAEQFRDALLAPPAWQEGGSMAHLLGTDDVGRDVLSRLMYGARLSLLVGCLVVVLSLIMGVILGLIAGYFGGLVDNIIMRVVDIMLALPSLLLALVLVAIFGPSIGNAALALTFVALPHYVRLTRAAVLVEVNRDYVTASRVAGAGAMRQMFINIFPNCLAPLIVQASLGFSNAILDMAALGFLGMGAQPPTPEWGTMLSDVLQFAQSAWWVVTFPGLAILLTVLAFNLMGDGLRDALDPKLKQ.

Topologically, residues Met-1 to Gly-31 are cytoplasmic. A helical membrane pass occupies residues Ala-32–Ile-52. Residues Ala-53 to Ser-101 are Periplasmic-facing. The ABC transmembrane type-1 domain occupies Ala-98–Gly-287. A helical transmembrane segment spans residues Leu-102–Ile-122. Residues Ala-123–Arg-136 lie on the Cytoplasmic side of the membrane. A helical transmembrane segment spans residues Val-137–Phe-157. Residues Gly-158–Gln-206 are Periplasmic-facing. Residues Met-207–Phe-227 traverse the membrane as a helical segment. The Cytoplasmic segment spans residues Ser-228–Ala-230. The helical transmembrane segment at Ile-231–Trp-251 threads the bilayer. The Periplasmic portion of the chain corresponds to Gly-252–Ala-265. A helical membrane pass occupies residues Trp-266–Met-286. Topologically, residues Gly-287–Gln-300 are cytoplasmic.

This sequence belongs to the binding-protein-dependent transport system permease family. OppBC subfamily. As to quaternary structure, the complex is composed of two ATP-binding proteins (DppD and DppF), two transmembrane proteins (DppB and DppC) and a solute-binding protein (DppA).

It is found in the cell inner membrane. Functionally, part of the ABC transporter DppABCDF involved in dipeptide transport. Responsible for the translocation of the substrate across the membrane. The polypeptide is Dipeptide transport system permease protein DppC (dppC) (Escherichia coli O157:H7).